A 550-amino-acid polypeptide reads, in one-letter code: Calcium-dependent protein kinase 20 (550 aa).

The tract at residues 1–58 is disordered; sequence MGNCCVTPEGSGRGRKKQQQEQKQKQKEPKQQQQQQKKGKKPNPFSIEYNRSSAPSGH. Glycine 2 is lipidated: N-myristoyl glycine. Over residues 18-30 the composition is skewed to basic and acidic residues; it reads QQQEQKQKQKEPK. The region spanning 75-333 is the Protein kinase domain; sequence YELGGELGRG…AQQVLDHPWL (259 aa). ATP is bound by residues 81–89 and lysine 104; that span reads LGRGEFGVT. Residue aspartate 199 is the Proton acceptor of the active site. The segment at 339 to 369 is autoinhibitory domain; that stretch reads APNVNLGETVKARLQQFSVMNKFKKHALRVI. EF-hand domains follow at residues 376-411, 412-447, 448-483, and 484-519; these read EEVA…LGHQ, MADA…LRKI, GNDE…DLGA, and NHEE…GTDW. Ca(2+)-binding residues include aspartate 389, asparagine 391, aspartate 393, methionine 395, glutamate 400, aspartate 425, aspartate 427, asparagine 429, serine 431, glutamate 436, aspartate 461, asparagine 463, serine 465, tyrosine 467, glutamate 472, aspartate 497, aspartate 499, aspartate 501, lysine 503, and glutamate 508.

This sequence belongs to the protein kinase superfamily. Ser/Thr protein kinase family. CDPK subfamily. As to expression, expressed in roots and leaf blades.

It localises to the membrane. The enzyme catalyses L-seryl-[protein] + ATP = O-phospho-L-seryl-[protein] + ADP + H(+). It carries out the reaction L-threonyl-[protein] + ATP = O-phospho-L-threonyl-[protein] + ADP + H(+). Activated by calcium. Autophosphorylation may play an important role in the regulation of the kinase activity. In terms of biological role, may play a role in signal transduction pathways that involve calcium as a second messenger. In Oryza sativa subsp. japonica (Rice), this protein is Calcium-dependent protein kinase 20.